We begin with the raw amino-acid sequence, 1149 residues long: DNA-directed RNA polymerase III subunit RPC2 (1149 aa).

The Zn(2+) site is built by cysteine 1095, cysteine 1098, cysteine 1107, and cysteine 1110. A C4-type zinc finger spans residues 1095-1110 (CDKCGLMGYSGWCTTC).

This sequence belongs to the RNA polymerase beta chain family. As to quaternary structure, component of the RNA polymerase III (Pol III) complex consisting of 17 subunits.

The protein resides in the nucleus. The enzyme catalyses RNA(n) + a ribonucleoside 5'-triphosphate = RNA(n+1) + diphosphate. DNA-dependent RNA polymerase catalyzes the transcription of DNA into RNA using the four ribonucleoside triphosphates as substrates. Second largest core component of RNA polymerase III which synthesizes small RNAs, such as 5S rRNA and tRNAs. Proposed to contribute to the polymerase catalytic activity and forms the polymerase active center together with the largest subunit. Pol III is composed of mobile elements and RPC2 is part of the core element with the central large cleft and probably a clamp element that moves to open and close the cleft. The sequence is that of DNA-directed RNA polymerase III subunit RPC2 (RET1) from Saccharomyces cerevisiae (strain ATCC 204508 / S288c) (Baker's yeast).